Reading from the N-terminus, the 105-residue chain is Large ribosomal subunit protein uL24 (105 aa).

This sequence belongs to the universal ribosomal protein uL24 family. In terms of assembly, part of the 50S ribosomal subunit.

Functionally, one of two assembly initiator proteins, it binds directly to the 5'-end of the 23S rRNA, where it nucleates assembly of the 50S subunit. In terms of biological role, one of the proteins that surrounds the polypeptide exit tunnel on the outside of the subunit. The protein is Large ribosomal subunit protein uL24 of Mycobacterium sp. (strain JLS).